A 316-amino-acid polypeptide reads, in one-letter code: 4-diphosphocytidyl-2-C-methyl-D-erythritol kinase (316 aa).

K11 is an active-site residue. 99–109 (PVAAGLAGGST) is a binding site for ATP. Residue D141 is part of the active site.

This sequence belongs to the GHMP kinase family. IspE subfamily.

It carries out the reaction 4-CDP-2-C-methyl-D-erythritol + ATP = 4-CDP-2-C-methyl-D-erythritol 2-phosphate + ADP + H(+). It functions in the pathway isoprenoid biosynthesis; isopentenyl diphosphate biosynthesis via DXP pathway; isopentenyl diphosphate from 1-deoxy-D-xylulose 5-phosphate: step 3/6. Its function is as follows. Catalyzes the phosphorylation of the position 2 hydroxy group of 4-diphosphocytidyl-2C-methyl-D-erythritol. This Gloeothece citriformis (strain PCC 7424) (Cyanothece sp. (strain PCC 7424)) protein is 4-diphosphocytidyl-2-C-methyl-D-erythritol kinase.